The sequence spans 724 residues: 1,3-beta-galactosyl-N-acetylhexosamine phosphorylase Cphy3030 (724 aa).

The active-site Proton donor is Asp316.

It belongs to the glycoside hydrolase 112 family.

It catalyses the reaction beta-D-galactosyl-(1-&gt;3)-N-acetyl-D-glucosamine + phosphate = alpha-D-galactose 1-phosphate + N-acetyl-D-glucosamine. In terms of biological role, reversibly phosphorolyzes beta-D-galactopyranosyl-(1-&gt;3)-N-acetyl-D-glucosamine to form alpha-D-galactopyranose 1-phosphate and acetyl-D-glucosamine. Active towards galacto-N-biose and lacto-N-biose. Does not phosphorolyze galacto-N-tetraose or lacto-N-tetraose. In the reverse reaction has activity toward N-acetyl-D-glucosamine and N-acetyl-D-galactosamine, but not L-rhamnose, D-glucose or D-galactose. The sequence is that of 1,3-beta-galactosyl-N-acetylhexosamine phosphorylase Cphy3030 from Lachnoclostridium phytofermentans (strain ATCC 700394 / DSM 18823 / ISDg) (Clostridium phytofermentans).